Reading from the N-terminus, the 348-residue chain is Rhodopsin (348 aa).

Met1 is modified (N-acetylmethionine). Residues 1 to 36 lie on the Extracellular side of the membrane; that stretch reads MNGTEGPNFYVPFSNKTGVVRSPFEYPQYYLAEPWQ. N-linked (GlcNAc...) asparagine glycosylation is found at Asn2 and Asn15. A helical transmembrane segment spans residues 37–61; sequence FSMLAAYMFLLIVLGFPINFLTLYV. Over 62 to 73 the chain is Cytoplasmic; that stretch reads TVQHKKLRTPLN. A helical membrane pass occupies residues 74–96; it reads YILLNLAVADLFMVFGGFTTTLY. The Extracellular segment spans residues 97–110; it reads TSLHGYFVFGPTGC. Cys110 and Cys187 are joined by a disulfide. The chain crosses the membrane as a helical span at residues 111 to 133; that stretch reads NVEGFFATLGGEIALWSLVVLAI. A 'Ionic lock' involved in activated form stabilization motif is present at residues 134–136; the sequence is ERY. At 134-152 the chain is on the cytoplasmic side; the sequence is ERYVVVCKPMSNFRFGENH. A helical transmembrane segment spans residues 153–173; sequence AIMGVAFTWVMALACAAPPLA. At 174–202 the chain is on the extracellular side; that stretch reads GWSRYIPEGMQCSCGIDYYTLKPEVNNES. Residue Glu201 coordinates Zn(2+). Residues 203–224 traverse the membrane as a helical segment; sequence FVIYMFVVHFTIPMIVIFFCYG. At 225–252 the chain is on the cytoplasmic side; the sequence is QLVFTVKEAAAQQQESATTQKAEKEVTR. A helical transmembrane segment spans residues 253-274; it reads MVIIMVIAFLICWVPYASVAFY. Residues 275-286 are Extracellular-facing; the sequence is IFTHQGSNFGPI. Gln279 contacts Zn(2+). The chain crosses the membrane as a helical span at residues 287–308; it reads FMTLPAFFAKSASIYNPVIYIM. At Lys296 the chain carries N6-(retinylidene)lysine. The Cytoplasmic segment spans residues 309–348; sequence MNKQFRNCMLTTICCGKNPFAEEEGATTVSKTETSQVAPA. Residues Cys322 and Cys323 are each lipidated (S-palmitoyl cysteine). Residues 330 to 348 are interaction with SAG; it reads EEEGATTVSKTETSQVAPA. 2 positions are modified to phosphothreonine: Thr335 and Thr336. At Ser338 the chain carries Phosphoserine. A phosphothreonine mark is found at Thr340 and Thr342. Residue Ser343 is modified to Phosphoserine.

The protein belongs to the G-protein coupled receptor 1 family. Opsin subfamily. In terms of assembly, homodimer. May form a complex composed of RHO, GRK1 and RCVRN in a Ca(2+)-dependent manner; RCVRN prevents the interaction between GRK1 and RHO. Interacts with GRK1. Interacts (phosphorylated form) with SAG. Interacts with GNAT1. Interacts with GNAT3. SAG and G-proteins compete for a common binding site. Interacts with PRCD; the interaction promotes PRCD stability. Forms a complex with ASAP1 and ARF4. Forms a complex with ASAP1, RAB11A, Rabin8/RAB3IP, ARF4 and RAB11FIP3; the complex regulates Golgi-to-cilia rhodopsin/RHO transport in photoreceptors. Post-translationally, phosphorylated on some or all of the serine and threonine residues present in the C-terminal region. Contains one covalently linked retinal chromophore. Upon light absorption, the covalently bound 11-cis-retinal is converted to all-trans-retinal. After hydrolysis of the Schiff base and release of the covalently bound all-trans-retinal, active rhodopsin is regenerated by binding of a fresh molecule of 11-cis-retinal.

The protein localises to the membrane. It is found in the cell projection. The protein resides in the cilium. It localises to the photoreceptor outer segment. In terms of biological role, photoreceptor required for image-forming vision at low light intensity. Required for photoreceptor cell viability after birth. Light-induced isomerization of 11-cis to all-trans retinal triggers a conformational change that activates signaling via G-proteins. Subsequent receptor phosphorylation mediates displacement of the bound G-protein alpha subunit by the arrestin SAG and terminates signaling. This chain is Rhodopsin (RHO), found in Trichechus manatus (Caribbean manatee).